Consider the following 293-residue polypeptide: MKKHKMLSLLAVSGLMGIGILAGCSNDSSSSSKGTINIVSREEGSGTRGAFIELFGIESKNKKGEKVDHTSDAATVTNSTSVMLTTVSKDPSAIGYSSLGSLNSSVKVLKIDGKNATVKDIKSGSYKISRPFNIVTKEGKEKEATKDFIDYILSKDGQAVVEKNGYIPLDNAKAYQAKVSSGKVVIAGSSSVTPVMEKIKEAYHKVNAKVDVEIQQSDSSTGITSAIDGSADIGMASRELDKTESSKGVKATVIATDGIAVVVNKKNKVNDLSTKQVKDIFTGKTTSWSDLSK.

The signal sequence occupies residues 1–23; it reads MKKHKMLSLLAVSGLMGIGILAG. The N-palmitoyl cysteine moiety is linked to residue Cys24. The S-diacylglycerol cysteine moiety is linked to residue Cys24.

This sequence belongs to the PstS family. In terms of assembly, the complex is composed of two ATP-binding proteins (PstB), two transmembrane proteins (PstC and PstA) and a solute-binding protein (PstS).

The protein resides in the cell membrane. In terms of biological role, part of the ABC transporter complex PstSACB involved in phosphate import. This chain is Phosphate-binding protein PstS 2 (pstS2), found in Streptococcus agalactiae serotype III (strain NEM316).